The following is a 160-amino-acid chain: Cyanate hydratase (160 aa).

Catalysis depends on residues R100, E103, and S126.

Belongs to the cyanase family.

It catalyses the reaction cyanate + hydrogencarbonate + 3 H(+) = NH4(+) + 2 CO2. Catalyzes the reaction of cyanate with bicarbonate to produce ammonia and carbon dioxide. This chain is Cyanate hydratase, found in Arthroderma otae (strain ATCC MYA-4605 / CBS 113480) (Microsporum canis).